The following is a 308-amino-acid chain: Ribosomal RNA large subunit methyltransferase F (308 aa).

This sequence belongs to the methyltransferase superfamily. METTL16/RlmF family.

It is found in the cytoplasm. It carries out the reaction adenosine(1618) in 23S rRNA + S-adenosyl-L-methionine = N(6)-methyladenosine(1618) in 23S rRNA + S-adenosyl-L-homocysteine + H(+). Specifically methylates the adenine in position 1618 of 23S rRNA. In Shigella boydii serotype 18 (strain CDC 3083-94 / BS512), this protein is Ribosomal RNA large subunit methyltransferase F.